The primary structure comprises 89 residues: Cell division protein ZapA (89 aa).

It belongs to the ZapA family. Type 2 subfamily. As to quaternary structure, homodimer. Interacts with FtsZ.

It localises to the cytoplasm. Functionally, activator of cell division through the inhibition of FtsZ GTPase activity, therefore promoting FtsZ assembly into bundles of protofilaments necessary for the formation of the division Z ring. It is recruited early at mid-cell but it is not essential for cell division. The sequence is that of Cell division protein ZapA from Bacillus mycoides (strain KBAB4) (Bacillus weihenstephanensis).